The primary structure comprises 408 residues: Serine/threonine transporter SstT (408 aa).

10 helical membrane-spanning segments follow: residues 15–35, 49–69, 85–105, 142–162, 192–212, 218–238, 246–268, 289–309, 317–337, and 362–382; these read MGLIPQITIGIIAGVLLAVIW, FISALKAVAPILVFALVTAAI, LLYVIGTLVAAVVAVIASFVF, ALMEGNFIAILAWAVGLGLML, PLGIFGLVANTLADAGIGALL, LAVIVGCMLFVALVTNPLIVF, YPLVFACLRGSAITAFFTRSSAA, ISIPLGATINMAGAAITISVI, LGIPVDFPTALLLCVVSSIAA, and TEVAMQVVAIGFVISVVQDST.

The protein belongs to the dicarboxylate/amino acid:cation symporter (DAACS) (TC 2.A.23) family.

The protein localises to the cell inner membrane. It catalyses the reaction L-serine(in) + Na(+)(in) = L-serine(out) + Na(+)(out). The enzyme catalyses L-threonine(in) + Na(+)(in) = L-threonine(out) + Na(+)(out). Involved in the import of serine and threonine into the cell, with the concomitant import of sodium (symport system). This is Serine/threonine transporter SstT from Marinobacter nauticus (strain ATCC 700491 / DSM 11845 / VT8) (Marinobacter aquaeolei).